Consider the following 291-residue polypeptide: ATP phosphoribosyltransferase (291 aa).

This sequence belongs to the ATP phosphoribosyltransferase family. Long subfamily. Mg(2+) is required as a cofactor.

The protein resides in the cytoplasm. The enzyme catalyses 1-(5-phospho-beta-D-ribosyl)-ATP + diphosphate = 5-phospho-alpha-D-ribose 1-diphosphate + ATP. Its pathway is amino-acid biosynthesis; L-histidine biosynthesis; L-histidine from 5-phospho-alpha-D-ribose 1-diphosphate: step 1/9. With respect to regulation, feedback inhibited by histidine. Its function is as follows. Catalyzes the condensation of ATP and 5-phosphoribose 1-diphosphate to form N'-(5'-phosphoribosyl)-ATP (PR-ATP). Has a crucial role in the pathway because the rate of histidine biosynthesis seems to be controlled primarily by regulation of HisG enzymatic activity. The protein is ATP phosphoribosyltransferase of Trichlorobacter lovleyi (strain ATCC BAA-1151 / DSM 17278 / SZ) (Geobacter lovleyi).